We begin with the raw amino-acid sequence, 421 residues long: Cytochrome c biogenesis protein Ccs1 (421 aa).

3 helical membrane passes run 12-32, 71-91, and 157-177; these read LRFAISILLIIASCSVIGTVI, TWWFLGFIALFGLSLFTCTIL, and IAPIIVHFSMILILIGAIFGA.

The protein belongs to the Ccs1/CcsB family. As to quaternary structure, may interact with CcsA.

It localises to the plastid. The protein localises to the chloroplast thylakoid membrane. In terms of biological role, required during biogenesis of c-type cytochromes (cytochrome c6 and cytochrome f) at the step of heme attachment. This is Cytochrome c biogenesis protein Ccs1 from Trieres chinensis (Marine centric diatom).